Consider the following 671-residue polypeptide: DNA ligase (671 aa).

NAD(+)-binding positions include 37–41 (DIEYD), 86–87 (SL), and glutamate 117. Residue lysine 119 is the N6-AMP-lysine intermediate of the active site. Arginine 140, glutamate 177, lysine 295, and lysine 319 together coordinate NAD(+). Zn(2+) contacts are provided by cysteine 413, cysteine 416, cysteine 431, and cysteine 437. The region spanning 594 to 671 (IISAAVFGKT…DEEEMLNLLK (78 aa)) is the BRCT domain.

The protein belongs to the NAD-dependent DNA ligase family. LigA subfamily. It depends on Mg(2+) as a cofactor. The cofactor is Mn(2+).

It carries out the reaction NAD(+) + (deoxyribonucleotide)n-3'-hydroxyl + 5'-phospho-(deoxyribonucleotide)m = (deoxyribonucleotide)n+m + AMP + beta-nicotinamide D-nucleotide.. In terms of biological role, DNA ligase that catalyzes the formation of phosphodiester linkages between 5'-phosphoryl and 3'-hydroxyl groups in double-stranded DNA using NAD as a coenzyme and as the energy source for the reaction. It is essential for DNA replication and repair of damaged DNA. The chain is DNA ligase from Polynucleobacter asymbioticus (strain DSM 18221 / CIP 109841 / QLW-P1DMWA-1) (Polynucleobacter necessarius subsp. asymbioticus).